The chain runs to 427 residues: 3-phosphoshikimate 1-carboxyvinyltransferase (427 aa).

Residues K20, S21, and R25 each contribute to the 3-phosphoshikimate site. K20 serves as a coordination point for phosphoenolpyruvate. 2 residues coordinate phosphoenolpyruvate: G92 and R120. Residues S165, Q167, D313, and K340 each contribute to the 3-phosphoshikimate site. Q167 serves as a coordination point for phosphoenolpyruvate. D313 (proton acceptor) is an active-site residue. Residues R344 and R388 each contribute to the phosphoenolpyruvate site.

It belongs to the EPSP synthase family. As to quaternary structure, monomer.

Its subcellular location is the cytoplasm. It carries out the reaction 3-phosphoshikimate + phosphoenolpyruvate = 5-O-(1-carboxyvinyl)-3-phosphoshikimate + phosphate. It participates in metabolic intermediate biosynthesis; chorismate biosynthesis; chorismate from D-erythrose 4-phosphate and phosphoenolpyruvate: step 6/7. Its function is as follows. Catalyzes the transfer of the enolpyruvyl moiety of phosphoenolpyruvate (PEP) to the 5-hydroxyl of shikimate-3-phosphate (S3P) to produce enolpyruvyl shikimate-3-phosphate and inorganic phosphate. This is 3-phosphoshikimate 1-carboxyvinyltransferase from Geobacillus kaustophilus (strain HTA426).